A 274-amino-acid polypeptide reads, in one-letter code: 4-diphosphocytidyl-2-C-methyl-D-erythritol kinase (274 aa).

Lys-8 is a catalytic residue. 92-102 (PSGAGLGGGSS) contributes to the ATP binding site. Asp-134 is a catalytic residue.

Belongs to the GHMP kinase family. IspE subfamily.

It carries out the reaction 4-CDP-2-C-methyl-D-erythritol + ATP = 4-CDP-2-C-methyl-D-erythritol 2-phosphate + ADP + H(+). Its pathway is isoprenoid biosynthesis; isopentenyl diphosphate biosynthesis via DXP pathway; isopentenyl diphosphate from 1-deoxy-D-xylulose 5-phosphate: step 3/6. In terms of biological role, catalyzes the phosphorylation of the position 2 hydroxy group of 4-diphosphocytidyl-2C-methyl-D-erythritol. The sequence is that of 4-diphosphocytidyl-2-C-methyl-D-erythritol kinase from Porphyromonas gingivalis (strain ATCC 33277 / DSM 20709 / CIP 103683 / JCM 12257 / NCTC 11834 / 2561).